Here is a 422-residue protein sequence, read N- to C-terminus: Synaptotagmin-2 (422 aa).

Residues Met-1 to Gln-43 are disordered. The Vesicular portion of the chain corresponds to Met-1–Lys-60. The segment covering Ala-14 to Ala-30 has biased composition (low complexity). Positions Asp-31 to Gly-40 are enriched in polar residues. N-linked (GlcNAc...) asparagine glycosylation occurs at Asn-32. A helical membrane pass occupies residues Ile-61 to Cys-87. Residues Lys-88–Lys-422 lie on the Cytoplasmic side of the membrane. The interval Gly-102 to Glu-141 is disordered. Over residues Asp-119–Glu-139 the composition is skewed to acidic residues. Phosphothreonine is present on residues Thr-125 and Thr-128. Positions Glu-136–Asn-382 are phospholipid binding. C2 domains lie at Asn-142–Arg-261 and Lys-273–His-406. Leu-172, Asp-173, and Asp-179 together coordinate Ca(2+). Position 202 is a phosphothreonine (Thr-202). Tyr-230 bears the Phosphotyrosine mark. The Ca(2+) site is built by Asp-231, Phe-232, Asp-233, Ser-236, Lys-237, Asp-239, Asp-304, Asp-310, Asp-364, and Asp-366. Phosphothreonine is present on Thr-386.

This sequence belongs to the synaptotagmin family. In terms of assembly, homotetramer. Heterodimer; heterodimerizes with SYT1 in presence of calcium. Interacts with SCAMP5. Interacts with STON2. Interacts with PRRT2. (Microbial infection) Interacts with C.botulinum neurotoxin type B (BoNT/B, botB). As to quaternary structure, (Microbial infection) Interacts with C.botulinum neurotoxin type G (BoNT/G, botG). Requires Ca(2+) as cofactor. In terms of processing, phosphorylation at Thr-202 by WNK1, changes the calcium requirement for SYT2-binding to phospholipid membranes.

Its subcellular location is the cytoplasmic vesicle. It is found in the secretory vesicle. It localises to the synaptic vesicle membrane. The protein resides in the chromaffin granule membrane. The protein localises to the cytoplasm. Its function is as follows. Exhibits calcium-dependent phospholipid and inositol polyphosphate binding properties. May have a regulatory role in the membrane interactions during trafficking of synaptic vesicles at the active zone of the synapse. Plays a role in dendrite formation by melanocytes. Functionally, (Microbial infection) Receptor for C.botulinum neurotoxin type B (BoNT/B, botB); interaction is improved in the presence of gangliosides. The toxin binds via the vesicular domain (residues 47-60). (Microbial infection) Receptor for C.botulinum neurotoxin type G (BoNT/G, botG); gangliosides are not required for (or only very slightly improve) binding to a membrane-anchored receptor fragment. The toxin binds via the vesicular domain (residues 47-55). The chain is Synaptotagmin-2 from Mus musculus (Mouse).